The sequence spans 591 residues: ATPase family AAA domain-containing protein 3A (591 aa).

The tract at residues 1 to 52 (MSWLFGIKGPKGEGTGPPLPLPPAQPGAESGGDRGAGDRPSPKDKWSNFDPT) is disordered. N-acetylserine is present on S2. Residues 2–49 (SWLFGIKGPKGEGTGPPLPLPPAQPGAESGGDRGAGDRPSPKDKWSNF) form a required for interaction with the inner surface of the mitochondrial outer membrane region. Over 2–245 (SWLFGIKGPK…FRAFVTDWDK (244 aa)) the chain is Mitochondrial intermembrane. Over residues 31 to 47 (GGDRGAGDRPSPKDKWS) the composition is skewed to basic and acidic residues. Residues 55 to 216 (ERAAKAAREL…REQIRLKAAE (162 aa)) are a coiled coil. A helical membrane pass occupies residues 246–263 (VTATVAGLTLLAVGVYSA). Topologically, residues 264 to 591 (KNATSVAGRY…KPPHPSLLSC (328 aa)) are mitochondrial matrix. Residues 289 to 304 (RISVLEALRHPIQVSR) are S100B-binding. 351–358 (GPPGTGKT) provides a ligand contact to ATP. K490 carries the N6-acetyllysine; alternate modification. Position 490 is an N6-succinyllysine; alternate (K490). An N6-acetyllysine mark is found at K494 and K512.

The protein belongs to the AAA ATPase family. As to quaternary structure, can form homooligomers. Homodimer formation at the N-terminus may be regulated by ATP and is required for the interaction with the inner surface of the mitochondrial outer membrane and correct mitochondrial homeostasis. Interacts with components of the mitochondrial ribosome and with other proteins involved in mitochondrial RNA metabolism. May also interact with protein involved in lipid metabolism, including STARD9. May interact with FAM210A. Interacts with GADD45GIP1. Interacts with S100B in a Ca(+2)- and Zn(+2)-dependent manner; this interaction probably occurs in the cytosol prior to mitochondrial targeting. S100B could assist ATAD3A cytoplasmic processing, preventing aggregation and favoring mitochondrial localization. Interacts with HSP60/HSPD1. Interacts with CLPB. Interacts with EIF2AK3/PERK; ATAD3A and EIF2S1/eIF-2-alpha occupy a common binding site within the cytoplasmic loop of EIF2AK3/PERK, leading to prevent EIF2AK3/PERK association with its substrate EIF2S1/eIF-2-alpha.

It is found in the mitochondrion inner membrane. Its subcellular location is the mitochondrion matrix. The protein resides in the mitochondrion nucleoid. The catalysed reaction is ATP + H2O = ADP + phosphate + H(+). Essential for mitochondrial network organization, mitochondrial metabolism and cell growth at organism and cellular level. May play an important role in mitochondrial protein synthesis. May also participate in mitochondrial DNA replication. May bind to mitochondrial DNA D-loops and contribute to nucleoid stability. Required for enhanced channeling of cholesterol for hormone-dependent steroidogenesis. Involved in mitochondrial-mediated antiviral innate immunity. Required to protect mitochondria from the PERK-mediated unfolded protein response: specifically inhibits the activity of EIF2AK3/PERK at mitochondria-endoplasmic reticulum contact sites, thereby providing a safe haven for mitochondrial protein translation during endoplasmic reticulum stress. Ability to inhibit EIF2AK3/PERK is independent of its ATPase activity. Also involved in the mitochondrial DNA damage response by promoting signaling between damaged genomes and the mitochondrial membrane, leading to activation of the integrated stress response (ISR). The sequence is that of ATPase family AAA domain-containing protein 3A (Atad3a) from Rattus norvegicus (Rat).